A 559-amino-acid chain; its full sequence is Hepatocyte nuclear factor 1-beta-A (559 aa).

Residues 1–35 are dimerization; that stretch reads MFANMVSKLTSLQQELLSALLDSGVTKDVLLQALE. An HNF-p1 domain is found at 5 to 36; it reads MVSKLTSLQQELLSALLDSGVTKDVLLQALED. Positions 53–98 are disordered; that stretch reads MSPSGSKLSDTDSKPVFHTLTNGHSKGKLSGDEGSEDGDDYDTPPI. A compositionally biased stretch (acidic residues) spans 85-94; that stretch reads EGSEDGDDYD. The 96-residue stretch at 100-195 folds into the POU-specific atypical domain; it reads KELQSQNTEE…ILRQFNQATQ (96 aa). The segment at residues 240 to 320 is a DNA-binding region (homeobox; HNF1-type); the sequence is LRRNRFKWGP…NRRKEEAFRQ (81 aa). Low complexity-rich tracts occupy residues 334–354 and 370–381; these read LNSL…SPPS and TSSTTINHHSSN. The interval 334-384 is disordered; sequence LNSLLSHSSPHHPQTSSSPPSKMQGVRYSQQGPGEVTSSTTINHHSSNAMS.

The protein belongs to the HNF1 homeobox family. As to quaternary structure, binds DNA as a dimer. Can form homodimer or heterodimer with HNF1-alpha. As to expression, during embryonic development, expressed dynamically in the developing hindbrain, kidney (pronephros), gut, liver and pancreas; expressed in both intermediate mesoderm (precursor to the kidney) and the caudal hindbrain (including rhombomeres r5 and r6) at 10 hpf with expression diminishing caudally by 14 hpf. Strongly expressed in adult kidney, gut, liver and swim bladder; weakly expressed in brain, eye, testis, ovary and heart.

The protein localises to the nucleus. Its function is as follows. Transcription factor that binds to the inverted palindrome 5'-GTTAATNATTAAC-3'. Required for induction of rhombomere r5/r6 gene expression in the hindbrain. In Danio rerio (Zebrafish), this protein is Hepatocyte nuclear factor 1-beta-A (hnf1ba).